Consider the following 367-residue polypeptide: Riboflavin biosynthesis protein VVA0006 (367 aa).

215–219 (RLHSE) lines the GTP pocket. 3 residues coordinate Zn(2+): Cys-220, Cys-231, and Cys-233. Residues Gln-236, 258–260 (EGR), and Thr-280 contribute to the GTP site. Asp-292 acts as the Proton acceptor in catalysis. The Nucleophile role is filled by Arg-294. Residues Thr-315 and Lys-320 each coordinate GTP.

This sequence in the N-terminal section; belongs to the YbiA family. It in the C-terminal section; belongs to the GTP cyclohydrolase II family. Zn(2+) serves as cofactor.

The enzyme catalyses 2,5-diamino-6-hydroxy-4-(5-phosphoribosylamino)-pyrimidine + H2O = 2,5,6-triamino-4-hydroxypyrimidine + D-ribose 5-phosphate. It carries out the reaction 5-amino-6-(5-phospho-D-ribosylamino)uracil + H2O = 5,6-diaminouracil + D-ribose 5-phosphate. It catalyses the reaction GTP + 4 H2O = 2,5-diamino-6-hydroxy-4-(5-phosphoribosylamino)-pyrimidine + formate + 2 phosphate + 3 H(+). The protein operates within cofactor biosynthesis; riboflavin biosynthesis; 5-amino-6-(D-ribitylamino)uracil from GTP: step 1/4. Functionally, catalyzes the hydrolysis of the N-glycosidic bond in the first two intermediates of riboflavin biosynthesis, which are highly reactive metabolites, yielding relatively innocuous products. Thus, can divert a surplus of harmful intermediates into relatively harmless products and pre-empt the damage these intermediates would otherwise do. Has no activity against GTP, nucleoside monophosphates or ADP-ribose. In terms of biological role, catalyzes the conversion of GTP to 2,5-diamino-6-ribosylamino-4(3H)-pyrimidinone 5'-phosphate (DARP), formate and pyrophosphate. This is Riboflavin biosynthesis protein VVA0006 from Vibrio vulnificus (strain YJ016).